The primary structure comprises 88 residues: Phage-like element PBSX protein XkdR (88 aa).

To B.subtilis YqbR.

The protein is Phage-like element PBSX protein XkdR (xkdR) of Bacillus subtilis (strain 168).